A 353-amino-acid chain; its full sequence is Stomatin-like protein 2, mitochondrial (353 aa).

Residues 1 to 28 constitute a mitochondrion transit peptide; that stretch reads MLARAARGTGALLLRGSVQASGRIPRRA. Serine 17 carries the post-translational modification Phosphoserine; by PKC/PRKCZ. Tyrosine 124 is modified (phosphotyrosine). Lysine 145 is modified (N6-acetyllysine; alternate). Residue lysine 145 is modified to N6-succinyllysine; alternate. Residues 215-252 are a coiled coil; that stretch reads INVAEGKKQAQILASEAEKAEQINQAAGEASAVLAKAK. Position 233 is an N6-acetyllysine (lysine 233). A disordered region spans residues 324–353; it reads VPGAQNSSEARRDVQTTDTSIEELGRVKLS. At serine 330 the chain carries Phosphoserine.

The protein belongs to the band 7/mec-2 family. Forms homooligomers. Interacts with MFN2; may form heterooligomers. Interacts with PHB1 and PHB2; recruits them to cardiolipin-enriched mitochondrial membranes and stabilizes them. Interacts with CACNA2D2.

The protein resides in the cell membrane. Its subcellular location is the mitochondrion. It localises to the mitochondrion inner membrane. It is found in the mitochondrion intermembrane space. The protein localises to the membrane raft. The protein resides in the cytoplasm. Its subcellular location is the cytoskeleton. Functionally, mitochondrial protein that probably regulates the biogenesis and the activity of mitochondria. Stimulates cardiolipin biosynthesis, binds cardiolipin-enriched membranes where it recruits and stabilizes some proteins including prohibitin and may therefore act in the organization of functional microdomains in mitochondrial membranes. Through regulation of the mitochondrial function may play a role into several biological processes including cell migration, cell proliferation, T-cell activation, calcium homeostasis and cellular response to stress. May play a role in calcium homeostasis through negative regulation of calcium efflux from mitochondria. Required for mitochondrial hyperfusion a pro-survival cellular response to stress which results in increased ATP production by mitochondria. May also regulate the organization of functional domains at the plasma membrane and play a role in T-cell activation through association with the T-cell receptor signaling complex and its regulation. The chain is Stomatin-like protein 2, mitochondrial (Stoml2) from Rattus norvegicus (Rat).